The following is a 245-amino-acid chain: tRNA pseudouridine synthase A 2 (245 aa).

Asp-53 serves as the catalytic Nucleophile. A substrate-binding site is contributed by Tyr-111.

Belongs to the tRNA pseudouridine synthase TruA family. As to quaternary structure, homodimer.

The catalysed reaction is uridine(38/39/40) in tRNA = pseudouridine(38/39/40) in tRNA. Formation of pseudouridine at positions 38, 39 and 40 in the anticodon stem and loop of transfer RNAs. The sequence is that of tRNA pseudouridine synthase A 2 from Bacillus cereus (strain ZK / E33L).